The following is a 316-amino-acid chain: MAFSDFAAICSKTPLPLCSVIKSKTHLILSNSTIIHDFDPLNLNVGVLPRCYARSIDLANTVIFDVGNAFINIGALGVILIILYNIRQKYTAIGRSEYLYFFQLTLLLIIFTLVVDCGVSPPGSGSYPYFVAIQIGLAGACCWALLIIGFLGFNLWEDGTTKSMLLVRGTSMLGFIANFLASILTFKAWITDHKVATMNASGMIVVVYIINAIFLFVFVICQLLVSLLVVRNLWVTGAIFLGLFFFVAGQVLVYAFSTQICEGFKHYLDGLFFGSICNVFTLMMVYKTWDMTTDDDLEFGVSVSKDGDVVYDNGFM.

7 helical membrane passes run 62–82, 99–119, 130–150, 170–190, 200–220, 233–253, and 266–286; these read VIFDVGNAFINIGALGVILII, LYFFQLTLLLIIFTLVVDCGV, FVAIQIGLAGACCWALLIIGF, TSMLGFIANFLASILTFKAWI, ASGMIVVVYIINAIFLFVFVI, LWVTGAIFLGLFFFVAGQVLV, and HYLDGLFFGSICNVFTLMMVY.

This sequence belongs to the CHS7 family. In terms of assembly, interacts with CHS3.

It is found in the endoplasmic reticulum membrane. Chaperone required for the export of the chitin synthase CHS3 from the endoplasmic reticulum. This chain is Chitin synthase export chaperone (CHS7), found in Saccharomyces cerevisiae (strain ATCC 204508 / S288c) (Baker's yeast).